A 551-amino-acid chain; its full sequence is FGGY carbohydrate kinase domain-containing protein (551 aa).

The protein belongs to the FGGY kinase family. In terms of tissue distribution, expressed in kidney, lung and small intestine and to a lower extent in liver and detected in cerebrospinal fluid (at protein level).

The enzyme catalyses D-ribulose + ATP = D-ribulose 5-phosphate + ADP + H(+). It functions in the pathway carbohydrate metabolism; pentose and glucuronate interconversion. Functionally, catalyzes ATP-dependent phosphorylation of D-ribulose at C-5 to form D-ribulose 5-phosphate. Postulated to function in a metabolite repair mechanism by preventing toxic accumulation of free D-ribulose formed by non-specific phosphatase activities. Alternatively, may play a role in regulating D-ribulose 5-phosphate recycling in the pentose phosphate pathway. Can phosphorylate ribitol with low efficiency. This chain is FGGY carbohydrate kinase domain-containing protein, found in Homo sapiens (Human).